Here is an 81-residue protein sequence, read N- to C-terminus: Large ribosomal subunit protein bL31B (81 aa).

It belongs to the bacterial ribosomal protein bL31 family. Type B subfamily. In terms of assembly, part of the 50S ribosomal subunit.

In Bdellovibrio bacteriovorus (strain ATCC 15356 / DSM 50701 / NCIMB 9529 / HD100), this protein is Large ribosomal subunit protein bL31B.